Here is a 350-residue protein sequence, read N- to C-terminus: Selenide, water dikinase (350 aa).

U15 is an active-site residue. Residue U15 is a non-standard amino acid, selenocysteine. ATP-binding positions include K18 and H47 to E49. A Mg(2+)-binding site is contributed by D50. Residues D67, D90, and G138 to S140 each bind ATP. Residue D90 participates in Mg(2+) binding. D227 is a binding site for Mg(2+).

It belongs to the selenophosphate synthase 1 family. Class I subfamily. Homodimer. Mg(2+) serves as cofactor.

It carries out the reaction hydrogenselenide + ATP + H2O = selenophosphate + AMP + phosphate + 2 H(+). Synthesizes selenophosphate from selenide and ATP. This chain is Selenide, water dikinase, found in Nitratidesulfovibrio vulgaris (strain DSM 19637 / Miyazaki F) (Desulfovibrio vulgaris).